A 334-amino-acid polypeptide reads, in one-letter code: MTHKISVLHQDKKFDFSLRPKKLTEFCGQKQLKERLDLFLRAAVQRNEVPGHCLFYGPPGLGKTSLAHIMANTIGKGLVIASGPQLLKPSDLIGLLTGLQEGDIFFIDEIHRMGKAAEEYLYPAMEDFKVDITLDSGPGARSVRLDLAPFTLVGATTRAGMLSEPLRTRFAFTGRVDYYTDEDLVSILSRSSQLLSIEANQETLLEIARRARGTPRLANNLLRWVRDFAQMREGNCINSAVAEKALAMLLIDNLGLNEIDIKLLSVMIDFYQGGPVGMKTLAMAVGEDVRTLEDMYEPFLILKGLVQRTARGRVATPLAYEHLNRNPKDRWGEE.

A large ATPase domain (RuvB-L) region spans residues 1–179 (MTHKISVLHQ…FAFTGRVDYY (179 aa)). ATP-binding positions include leucine 18, arginine 19, glycine 60, lysine 63, threonine 64, serine 65, 126-128 (EDF), arginine 169, tyrosine 179, and arginine 216. Residue threonine 64 coordinates Mg(2+). The segment at 180–250 (TDEDLVSILS…VAEKALAMLL (71 aa)) is small ATPAse domain (RuvB-S). Residues 253–334 (NLGLNEIDIK…RNPKDRWGEE (82 aa)) form a head domain (RuvB-H) region. Arginine 308 and arginine 313 together coordinate DNA.

Belongs to the RuvB family. As to quaternary structure, homohexamer. Forms an RuvA(8)-RuvB(12)-Holliday junction (HJ) complex. HJ DNA is sandwiched between 2 RuvA tetramers; dsDNA enters through RuvA and exits via RuvB. An RuvB hexamer assembles on each DNA strand where it exits the tetramer. Each RuvB hexamer is contacted by two RuvA subunits (via domain III) on 2 adjacent RuvB subunits; this complex drives branch migration. In the full resolvosome a probable DNA-RuvA(4)-RuvB(12)-RuvC(2) complex forms which resolves the HJ.

It is found in the cytoplasm. It carries out the reaction ATP + H2O = ADP + phosphate + H(+). Functionally, the RuvA-RuvB-RuvC complex processes Holliday junction (HJ) DNA during genetic recombination and DNA repair, while the RuvA-RuvB complex plays an important role in the rescue of blocked DNA replication forks via replication fork reversal (RFR). RuvA specifically binds to HJ cruciform DNA, conferring on it an open structure. The RuvB hexamer acts as an ATP-dependent pump, pulling dsDNA into and through the RuvAB complex. RuvB forms 2 homohexamers on either side of HJ DNA bound by 1 or 2 RuvA tetramers; 4 subunits per hexamer contact DNA at a time. Coordinated motions by a converter formed by DNA-disengaged RuvB subunits stimulates ATP hydrolysis and nucleotide exchange. Immobilization of the converter enables RuvB to convert the ATP-contained energy into a lever motion, pulling 2 nucleotides of DNA out of the RuvA tetramer per ATP hydrolyzed, thus driving DNA branch migration. The RuvB motors rotate together with the DNA substrate, which together with the progressing nucleotide cycle form the mechanistic basis for DNA recombination by continuous HJ branch migration. Branch migration allows RuvC to scan DNA until it finds its consensus sequence, where it cleaves and resolves cruciform DNA. The polypeptide is Holliday junction branch migration complex subunit RuvB (Chlamydia trachomatis serovar A (strain ATCC VR-571B / DSM 19440 / HAR-13)).